Here is a 149-residue protein sequence, read N- to C-terminus: Large ribosomal subunit protein uL24 (149 aa).

This sequence belongs to the universal ribosomal protein uL24 family. Part of the 50S ribosomal subunit.

One of two assembly initiator proteins, it binds directly to the 5'-end of the 23S rRNA, where it nucleates assembly of the 50S subunit. Functionally, located at the polypeptide exit tunnel on the outside of the subunit. This chain is Large ribosomal subunit protein uL24, found in Hyperthermus butylicus (strain DSM 5456 / JCM 9403 / PLM1-5).